The following is a 308-amino-acid chain: Ribosomal RNA small subunit methyltransferase H (308 aa).

Residues 34–36 (GGH), Asp54, Phe80, Asp101, and Gln108 each bind S-adenosyl-L-methionine.

It belongs to the methyltransferase superfamily. RsmH family.

Its subcellular location is the cytoplasm. It carries out the reaction cytidine(1402) in 16S rRNA + S-adenosyl-L-methionine = N(4)-methylcytidine(1402) in 16S rRNA + S-adenosyl-L-homocysteine + H(+). In terms of biological role, specifically methylates the N4 position of cytidine in position 1402 (C1402) of 16S rRNA. The chain is Ribosomal RNA small subunit methyltransferase H from Ureaplasma urealyticum serovar 10 (strain ATCC 33699 / Western).